Consider the following 512-residue polypeptide: Differentially expressed in FDCP 8 homolog (512 aa).

M1 is modified (N-acetylmethionine). Positions 77 to 116 (NPFNKQSGPRQHEQGPGEEVPDVTPEEALPELPPGEPEFR) are disordered. Positions 95–105 (EVPDVTPEEAL) are enriched in acidic residues. 2 Phorbol-ester/DAG-type zinc fingers span residues 199 to 250 (EHRF…SKPC) and 429 to 489 (IHTL…STTC). S501 is subject to Phosphoserine.

Belongs to the DEF8 family. In terms of assembly, interacts (via C-terminus) with PLEKHM1; this interaction is weak but increased in a RAB7A-dependent manner.

Functionally, positively regulates lysosome peripheral distribution and ruffled border formation in osteoclasts. Involved in bone resorption. The polypeptide is Differentially expressed in FDCP 8 homolog (DEF8) (Homo sapiens (Human)).